Reading from the N-terminus, the 423-residue chain is Gamma-glutamyl phosphate reductase (423 aa).

This sequence belongs to the gamma-glutamyl phosphate reductase family.

Its subcellular location is the cytoplasm. It carries out the reaction L-glutamate 5-semialdehyde + phosphate + NADP(+) = L-glutamyl 5-phosphate + NADPH + H(+). It participates in amino-acid biosynthesis; L-proline biosynthesis; L-glutamate 5-semialdehyde from L-glutamate: step 2/2. In terms of biological role, catalyzes the NADPH-dependent reduction of L-glutamate 5-phosphate into L-glutamate 5-semialdehyde and phosphate. The product spontaneously undergoes cyclization to form 1-pyrroline-5-carboxylate. In Burkholderia ambifaria (strain MC40-6), this protein is Gamma-glutamyl phosphate reductase.